Consider the following 301-residue polypeptide: tRNA uridine(34) hydroxylase (301 aa).

The Rhodanese domain occupies 120–214 (SAPDVAVIDT…YLEDVPEDQS (95 aa)). Cys174 acts as the Cysteine persulfide intermediate in catalysis.

The protein belongs to the TrhO family.

It catalyses the reaction uridine(34) in tRNA + AH2 + O2 = 5-hydroxyuridine(34) in tRNA + A + H2O. Functionally, catalyzes oxygen-dependent 5-hydroxyuridine (ho5U) modification at position 34 in tRNAs. This Jannaschia sp. (strain CCS1) protein is tRNA uridine(34) hydroxylase.